The chain runs to 185 residues: Ribosome-recycling factor (185 aa).

Belongs to the RRF family.

The protein resides in the cytoplasm. Its function is as follows. Responsible for the release of ribosomes from messenger RNA at the termination of protein biosynthesis. May increase the efficiency of translation by recycling ribosomes from one round of translation to another. The protein is Ribosome-recycling factor of Corynebacterium efficiens (strain DSM 44549 / YS-314 / AJ 12310 / JCM 11189 / NBRC 100395).